A 205-amino-acid chain; its full sequence is Urease accessory protein UreG 1 (205 aa).

14–21 provides a ligand contact to GTP; that stretch reads GPVGSGKT.

This sequence belongs to the SIMIBI class G3E GTPase family. UreG subfamily. Homodimer. UreD, UreF and UreG form a complex that acts as a GTP-hydrolysis-dependent molecular chaperone, activating the urease apoprotein by helping to assemble the nickel containing metallocenter of UreC. The UreE protein probably delivers the nickel.

The protein localises to the cytoplasm. Its function is as follows. Facilitates the functional incorporation of the urease nickel metallocenter. This process requires GTP hydrolysis, probably effectuated by UreG. This Methylobacterium radiotolerans (strain ATCC 27329 / DSM 1819 / JCM 2831 / NBRC 15690 / NCIMB 10815 / 0-1) protein is Urease accessory protein UreG 1.